We begin with the raw amino-acid sequence, 306 residues long: Glutathione transport system permease protein GsiC (306 aa).

Over 1-8 the chain is Cytoplasmic; it reads MLNYVIKR. The helical transmembrane segment at 9-29 threads the bilayer; sequence LLGLIPTLFIVSVLVFLFVHM. Topologically, residues 30 to 102 are periplasmic; that stretch reads LPGDPARLIA…SRFMPTLWLT (73 aa). The region spanning 95–292 is the ABC transmembrane type-1 domain; sequence FMPTLWLTIT…LEFILINLVV (198 aa). Residues 103-123 form a helical membrane-spanning segment; it reads ITSMVWAVIFGMAAGIIAAVW. At 124-134 the chain is on the cytoplasmic side; it reads RNRWPDRLSMT. A helical membrane pass occupies residues 135–155; that stretch reads IAVSGISFPAFALGMLLIQVF. Residues 156-168 are Periplasmic-facing; it reads SVELGWLPTVGAD. A helical membrane pass occupies residues 169–189; it reads SWQHYILSSLTLGAAVAAVMA. At 190–228 the chain is on the cytoplasmic side; the sequence is RFTRASFVDVLSEDYMRTARAKGVSETWVVLKHGLRNAM. Residues 229 to 249 traverse the membrane as a helical segment; the sequence is IPVVTMMGLQFGFLLGGSIVV. Over 250 to 277 the chain is Periplasmic; that stretch reads EKVFNWPGLGRLLVDSVEMRDYPVIQAE. A helical membrane pass occupies residues 278 to 298; that stretch reads ILLFSLEFILINLVVDVLYAA. At 299–306 the chain is on the cytoplasmic side; that stretch reads INPAIRYK.

The protein belongs to the binding-protein-dependent transport system permease family. The complex is composed of two ATP-binding proteins (GsiA), two transmembrane proteins (GsiC and GsiD) and a solute-binding protein (GsiB).

It localises to the cell inner membrane. In terms of biological role, part of the ABC transporter complex GsiABCD involved in glutathione import. Probably responsible for the translocation of the substrate across the membrane. In Shigella boydii serotype 4 (strain Sb227), this protein is Glutathione transport system permease protein GsiC.